An 86-amino-acid polypeptide reads, in one-letter code: Putative membrane protein insertion efficiency factor (86 aa).

It belongs to the UPF0161 family.

It is found in the cell inner membrane. Its function is as follows. Could be involved in insertion of integral membrane proteins into the membrane. The protein is Putative membrane protein insertion efficiency factor of Pseudomonas aeruginosa (strain LESB58).